Reading from the N-terminus, the 197-residue chain is Probable nicotinate-nucleotide adenylyltransferase (197 aa).

It belongs to the NadD family.

The enzyme catalyses nicotinate beta-D-ribonucleotide + ATP + H(+) = deamido-NAD(+) + diphosphate. It participates in cofactor biosynthesis; NAD(+) biosynthesis; deamido-NAD(+) from nicotinate D-ribonucleotide: step 1/1. Functionally, catalyzes the reversible adenylation of nicotinate mononucleotide (NaMN) to nicotinic acid adenine dinucleotide (NaAD). This Neisseria meningitidis serogroup C (strain 053442) protein is Probable nicotinate-nucleotide adenylyltransferase.